We begin with the raw amino-acid sequence, 427 residues long: Gustatory receptor for sugar taste 43a (427 aa).

Residues 1–37 (MEISQPSIGIFYISKVLALAPYATVRNSKGRVEIGRS) lie on the Cytoplasmic side of the membrane. A helical transmembrane segment spans residues 38–63 (WLFTVYSATLTVVMVFLTYRGLLFDA). Topologically, residues 64 to 75 (NSEIPVRMKSAT) are extracellular. 2 residues coordinate beta-D-fructose: Arg70 and Asp83. Residues 76 to 96 (SKVVTALDVSVVVMAIVSGVY) traverse the membrane as a helical segment. Residues 97–135 (CGLFSLNDTLELNDRLNKIDNTLNAYNNFRRDRWRALGM) are Cytoplasmic-facing. The helical transmembrane segment at 136-158 (AAVSLLAISILVGLDVGTWMRIA) threads the bilayer. The Extracellular segment spans residues 159 to 168 (QDMNIAQSDT). Residues 169–193 (ELNVHWYIPFYSLYFILTGLQVNIA) traverse the membrane as a helical segment. A beta-D-fructose-binding site is contributed by Tyr182. The Cytoplasmic portion of the chain corresponds to 194-293 (NTAYGLGRRF…CVHLLSNSFG (100 aa)). A helical transmembrane segment spans residues 294–316 (IAVLFILVSCLLHLVATAYFLFL). Thr310 is a binding site for beta-D-fructose. The Extracellular segment spans residues 317–324 (ELLSKRDN). Residues 325–346 (GYLWVQMLWICFHFLRLLMVVE) traverse the membrane as a helical segment. His337 lines the beta-D-fructose pocket. The Cytoplasmic segment spans residues 347-402 (PCHLAARESRKTIQIVCEIERKVHEPILAEAVKKFWQQLLVVDADFSACGLCRVNR). The chain crosses the membrane as a helical span at residues 403 to 423 (TILTSFASAIATYLVILIQFQ). Gln421 provides a ligand contact to Ca(2+). Topologically, residues 424-427 (RTNG) are extracellular.

It belongs to the insect chemoreceptor superfamily. Gustatory receptor (GR) family. Gr21a subfamily. Homotetramer. Expressed in the adult labellar chemosensory neurons and in the adult head, abdomen, leg and wing. In larvae, is expressed in taste organs, as well as the brain and the gastrointestinal system.

It localises to the cell membrane. Gustatory receptor which mediates acceptance or avoidance behavior, depending on its substrates. Gr43a is the main sugar receptor in larvae. Functions as a narrowly tuned fructose receptor in taste neurons but also as a fructose receptor in the brain. Necessary and sufficient to sense hemolymph fructose and promote feeding in hungry flies but suppress feeding in satiated flies. The sequence is that of Gustatory receptor for sugar taste 43a (Gr43a) from Drosophila melanogaster (Fruit fly).